A 527-amino-acid chain; its full sequence is Ribonuclease Y 2 (527 aa).

The helical transmembrane segment at 2–22 (IAMIATAIIGIVAGGGLGWAL) threads the bilayer. Residues 339 to 432 (QYFHCGEVGW…VIAADAVSGA (94 aa)) form the HD domain.

This sequence belongs to the RNase Y family.

It localises to the cell membrane. Endoribonuclease that initiates mRNA decay. This Bdellovibrio bacteriovorus (strain ATCC 15356 / DSM 50701 / NCIMB 9529 / HD100) protein is Ribonuclease Y 2.